The sequence spans 156 residues: Small ribosomal subunit protein uS7 (156 aa).

It belongs to the universal ribosomal protein uS7 family. In terms of assembly, part of the 30S ribosomal subunit. Contacts proteins S9 and S11.

Functionally, one of the primary rRNA binding proteins, it binds directly to 16S rRNA where it nucleates assembly of the head domain of the 30S subunit. Is located at the subunit interface close to the decoding center, probably blocks exit of the E-site tRNA. The polypeptide is Small ribosomal subunit protein uS7 (Allorhizobium ampelinum (strain ATCC BAA-846 / DSM 112012 / S4) (Agrobacterium vitis (strain S4))).